Reading from the N-terminus, the 397-residue chain is S-adenosylmethionine synthase (397 aa).

His-15 is an ATP binding site. Asp-17 provides a ligand contact to Mg(2+). Glu-43 is a K(+) binding site. L-methionine contacts are provided by Glu-56 and Gln-99. Residues 99–109 are flexible loop; sequence QSPDIAQGVTA. ATP-binding positions include 173–175, 242–243, Asp-251, 257–258, Ala-274, and Lys-278; these read DGK, KF, and RK. Asp-251 contributes to the L-methionine binding site. Position 282 (Lys-282) interacts with L-methionine.

It belongs to the AdoMet synthase family. Homotetramer; dimer of dimers. The cofactor is Mg(2+). It depends on K(+) as a cofactor.

The protein resides in the cytoplasm. The enzyme catalyses L-methionine + ATP + H2O = S-adenosyl-L-methionine + phosphate + diphosphate. The protein operates within amino-acid biosynthesis; S-adenosyl-L-methionine biosynthesis; S-adenosyl-L-methionine from L-methionine: step 1/1. Its function is as follows. Catalyzes the formation of S-adenosylmethionine (AdoMet) from methionine and ATP. The overall synthetic reaction is composed of two sequential steps, AdoMet formation and the subsequent tripolyphosphate hydrolysis which occurs prior to release of AdoMet from the enzyme. The chain is S-adenosylmethionine synthase from Cutibacterium acnes (strain DSM 16379 / KPA171202) (Propionibacterium acnes).